Reading from the N-terminus, the 386-residue chain is MAEIPTSSNPSDDPETQKLNGNEEDYDHHHDEDPESDDENYEYALQIAEMLPFPMVMQTAIELDLLGIIATAGPDRQLSAAEIAAALPAAGNPDAPAMLDRMLYLLATYSVVTCTAVDGGASGGVVRKYGLAPVAKYFVSNEDGVSLGALISLNQGQAFLASWSKLKEAVLEGGIPFNKVHGMDVFHYQGTDPRFNKIFNKAMYGQSTYIIKKIVRRYKGFENIQRLVDVGGGLGHTLRVITSNYPSIKGINFDLPHVIQHAPTIPGVEHVGGDMFESIPNGDAIFMKCILHDWSDEHCLKTLKNCYKALPRKGKVIVVQMNMIEEPQTTPLAKAISQLDVCLMTQSPGGKERTRREFQTLAEAAGFAEFNPVCHVAGFWVMEFLK.

The S-adenosyl-L-homocysteine site is built by serine 207, glycine 231, aspartate 254, aspartate 274, and lysine 288. Residue aspartate 254 coordinates S-adenosyl-L-methionine. Histidine 292 serves as the catalytic Proton acceptor.

This sequence belongs to the class I-like SAM-binding methyltransferase superfamily. Cation-independent O-methyltransferase family. As to quaternary structure, homodimer. As to expression, expressed at high levels in all tissues.

The enzyme catalyses 4-hydroxy-3,5-dimethoxyphenethylamine + S-adenosyl-L-methionine = mescaline + S-adenosyl-L-homocysteine + H(+). It catalyses the reaction dopamine + S-adenosyl-L-methionine = 4-methoxytyramine + S-adenosyl-L-homocysteine + H(+). The protein operates within aromatic compound metabolism. It participates in alkaloid biosynthesis. Its function is as follows. O-methyltransferase participating in the biosynthesis of natural products derived from phenylethylamine, including mescaline, a natural hallucinogen potentially used in psychotherapeutic treatments. Catalyzes the O-methylation of dopamine, 4-hydroxy-3,5-dimethoxyphenethylamine, 4,5-dihydroxy-3-methoxyphenethylamine and N-methyl-4,5-dihydroxy-3-methoxyphenethylamine. Also involved in the conversion of N-methyl-4-hydroxy-3,5-dimethoxyphenethylamine to N-methylmescaline. The chain is O-methyltransferase 12 from Lophophora williamsii (Peyote).